Here is a 379-residue protein sequence, read N- to C-terminus: NAD-dependent protein deacetylase sirtuin-2 (379 aa).

Basic and acidic residues predominate over residues 1-10 (MSEEVSKRVE). The segment at 1-32 (MSEEVSKRVEEEADTPGLEGQSDDSSDEGDAS) is disordered. Residues 21–32 (QSDDSSDEGDAS) are compositionally biased toward acidic residues. One can recognise a Deacetylase sirtuin-type domain in the interval 55–335 (KVLDELTLDS…MTLAELLGWK (281 aa)). Residues 83–87 (AGIST), 93–95 (DFR), and 165–168 (QNID) each bind NAD(+). Residue histidine 185 is the Proton acceptor of the active site. Zn(2+) is bound by residues cysteine 193, cysteine 198, cysteine 219, and cysteine 222. NAD(+) contacts are provided by residues 260 to 261 (TS), 284 to 286 (NME), and cysteine 321. The span at 349–361 (IDSKDAKKTDKEA) shows a compositional bias: basic and acidic residues. Residues 349–379 (IDSKDAKKTDKEASQSSKSAVAEAEKTDKTE) form a disordered region.

This sequence belongs to the sirtuin family. Class I subfamily. Requires Zn(2+) as cofactor.

Its subcellular location is the cytoplasm. It localises to the nucleus. It catalyses the reaction N(6)-acetyl-L-lysyl-[protein] + NAD(+) + H2O = 2''-O-acetyl-ADP-D-ribose + nicotinamide + L-lysyl-[protein]. The enzyme catalyses N(6)-tetradecanoyl-L-lysyl-[protein] + NAD(+) + H2O = 2''-O-tetradecanoyl-ADP-D-ribose + nicotinamide + L-lysyl-[protein]. The catalysed reaction is N(6)-hexadecanoyl-L-lysyl-[protein] + NAD(+) + H2O = 2''-O-hexadecanoyl-ADP-D-ribose + nicotinamide + L-lysyl-[protein]. NAD-dependent protein deacetylase, which deacetylates internal lysines on histone and alpha-tubulin as well as many other proteins such as key transcription factors. Participates in the modulation of multiple and diverse biological processes such as cell cycle control, genomic integrity, microtubule dynamics, cell differentiation, metabolic networks, and autophagy. Plays a major role in the control of cell cycle progression and genomic stability. Deacetylates histone H4 at 'Lys-16' (H4K16ac) at the VEGFA promoter. Thereby contributes to regulate expression of vegfa, a key regulator of angiogenesis. In addition to protein deacetylase activity, also has activity toward long-chain fatty acyl groups and mediates protein-lysine demyristoylation and depalmitoylation of target proteins. The chain is NAD-dependent protein deacetylase sirtuin-2 (sirt2) from Danio rerio (Zebrafish).